The primary structure comprises 561 residues: 2-succinyl-5-enolpyruvyl-6-hydroxy-3-cyclohexene-1-carboxylate synthase (561 aa).

Belongs to the TPP enzyme family. MenD subfamily. In terms of assembly, homodimer. Mg(2+) is required as a cofactor. It depends on Mn(2+) as a cofactor. Thiamine diphosphate serves as cofactor.

The enzyme catalyses isochorismate + 2-oxoglutarate + H(+) = 5-enolpyruvoyl-6-hydroxy-2-succinyl-cyclohex-3-ene-1-carboxylate + CO2. It participates in quinol/quinone metabolism; 1,4-dihydroxy-2-naphthoate biosynthesis; 1,4-dihydroxy-2-naphthoate from chorismate: step 2/7. Its pathway is cofactor biosynthesis; phylloquinone biosynthesis. Its function is as follows. Catalyzes the thiamine diphosphate-dependent decarboxylation of 2-oxoglutarate and the subsequent addition of the resulting succinic semialdehyde-thiamine pyrophosphate anion to isochorismate to yield 2-succinyl-5-enolpyruvyl-6-hydroxy-3-cyclohexene-1-carboxylate (SEPHCHC). The protein is 2-succinyl-5-enolpyruvyl-6-hydroxy-3-cyclohexene-1-carboxylate synthase of Synechococcus sp. (strain CC9605).